Reading from the N-terminus, the 209-residue chain is Large ribosomal subunit protein uL3 (209 aa).

It belongs to the universal ribosomal protein uL3 family. Part of the 50S ribosomal subunit. Forms a cluster with proteins L14 and L19.

In terms of biological role, one of the primary rRNA binding proteins, it binds directly near the 3'-end of the 23S rRNA, where it nucleates assembly of the 50S subunit. This is Large ribosomal subunit protein uL3 from Nitratidesulfovibrio vulgaris (strain ATCC 29579 / DSM 644 / CCUG 34227 / NCIMB 8303 / VKM B-1760 / Hildenborough) (Desulfovibrio vulgaris).